Consider the following 176-residue polypeptide: NAD(P)H-quinone oxidoreductase subunit I, chloroplastic (176 aa).

4Fe-4S ferredoxin-type domains follow at residues 55 to 84 and 95 to 124; these read GRIH…VNWE and QTYS…MTEE. [4Fe-4S] cluster is bound by residues Cys-64, Cys-67, Cys-70, Cys-74, Cys-104, Cys-107, Cys-110, and Cys-114.

Belongs to the complex I 23 kDa subunit family. NDH is composed of at least 16 different subunits, 5 of which are encoded in the nucleus. [4Fe-4S] cluster serves as cofactor.

The protein resides in the plastid. Its subcellular location is the chloroplast thylakoid membrane. It carries out the reaction a plastoquinone + NADH + (n+1) H(+)(in) = a plastoquinol + NAD(+) + n H(+)(out). It catalyses the reaction a plastoquinone + NADPH + (n+1) H(+)(in) = a plastoquinol + NADP(+) + n H(+)(out). In terms of biological role, NDH shuttles electrons from NAD(P)H:plastoquinone, via FMN and iron-sulfur (Fe-S) centers, to quinones in the photosynthetic chain and possibly in a chloroplast respiratory chain. The immediate electron acceptor for the enzyme in this species is believed to be plastoquinone. Couples the redox reaction to proton translocation, and thus conserves the redox energy in a proton gradient. In Mesostigma viride (Green alga), this protein is NAD(P)H-quinone oxidoreductase subunit I, chloroplastic.